The chain runs to 303 residues: Phytochrome-associated serine/threonine-protein phosphatase 1 (303 aa).

Asp-50, His-52, Asp-78, and Asn-110 together coordinate Zn(2+). The Proton donor role is filled by His-111. Residues His-160 and His-234 each coordinate Zn(2+).

Belongs to the PPP phosphatase family. PP-6 (PP-V) subfamily. In terms of assembly, interacts with PHYA and PHYB, mostly when they are phosphorylated and in Pfr forms. Interacts with TAP46. Interacts with PIN1 and PIN2. Interacts with ABI5. Interacts with PIF3 and PIF4. Protein phosphatase 6 (PP6) holoenzyme is a heterotrimeric complex formed by the catalytic subunit FYPP, a SAPS domain-containing subunit (SAL) and a protein phosphatase 2A regulatory subunit A (PP2AA). Zn(2+) is required as a cofactor. As to expression, mostly expressed in flowers. Also detected to a lower extent in stems and leaves. Expressed in roots.

It is found in the cytoplasm. The enzyme catalyses O-phospho-L-seryl-[protein] + H2O = L-seryl-[protein] + phosphate. It catalyses the reaction O-phospho-L-threonyl-[protein] + H2O = L-threonyl-[protein] + phosphate. Its function is as follows. Catalytic subunit of protein phosphatase 6 (PP6). Dephosphorylates phosphorylated phytochromes, with a preference toward Pfr forms. Plays a major role in the photoperiodic control of flowering time in long days by modulating phytochrome signals in flowering time control. Involved in the regulation of polar auxin transport in roots. Dephosphorylates directly the auxin efflux carriers PIN1 and PIN2, thus promoting their proper polar localization in root cell plasma membrane. Acts antagonistically with the protein kinase PID to regulate the reversible phosphorylation of PIN and polar targeting, subsequently impacting polar auxin transport and plant development. Involved in the regulation of abscisic acid (ABA) signaling during seed germination and postgermination seedling growth. Functions as a negative regulator of ABA signaling through direct dephosphorylation and destabilization of ABI5. Acts antagonistically with the protein kinase SRK2E/SNRK2.6 to regulate ABI5 phosphorylation and ABA responses. Involved in the regulation of phosphorylation status in hypocotyl phototropism. Involved in the negative regulation of photomorphogenesis by controlling the stability and transcriptional activity of PIF3 and PIF4 proteins in the dark, via the regulation of their phosphorylation status. The sequence is that of Phytochrome-associated serine/threonine-protein phosphatase 1 from Arabidopsis thaliana (Mouse-ear cress).